The sequence spans 299 residues: Apolipoprotein E (299 aa).

Residues 1–18 (MKVLCTVLVVTLLAGCQA) form the signal peptide. The interval 74–245 (VLMEDTMKAV…RLEEVREQME (172 aa)) is 8 X 22 AA approximate tandem repeats. A run of 8 repeats spans residues 75–95 (LMED…QELV), 96–117 (PMAE…ARLG), 118–139 (ADME…AMLG), 140–161 (QSAE…KKLL), 162–183 (RDAE…EGAE), 184–206 (RSVS…RAAL), 207–225 (TSQP…LRGR), and 224–242 (GRLE…EVRE). Residue Met-137 is modified to Methionine sulfoxide. Ser-141 carries the phosphoserine modification. An LDL and other lipoprotein receptors binding region spans residues 152–162 (HLRKLRKKLLR). Residue 156–159 (LRKK) coordinates heparin. A lipid-binding and lipoprotein association region spans residues 205-273 (ALTSQPLQER…GWFEPMVEDM (69 aa)). 219–226 (GKRLRGRL) provides a ligand contact to heparin. The specificity for association with VLDL stretch occupies residues 261-273 (RLKGWFEPMVEDM).

It belongs to the apolipoprotein A1/A4/E family. Homotetramer. May interact with ABCA1; functionally associated with ABCA1 in the biogenesis of HDLs. May interact with APP/A4 amyloid-beta peptide; the interaction is extremely stable in vitro but its physiological significance is unclear. May interact with MAPT. May interact with MAP2. In the cerebrospinal fluid, interacts with secreted SORL1. Interacts with PMEL; this allows the loading of PMEL luminal fragment on ILVs to induce fibril nucleation. APOE exists as multiple glycosylated and sialylated glycoforms within cells and in plasma. The extent of glycosylation and sialylation are tissue and context specific. In terms of processing, glycated in plasma VLDL. Post-translationally, phosphorylated by FAM20C in the extracellular medium.

It localises to the secreted. The protein resides in the extracellular space. The protein localises to the extracellular matrix. Its subcellular location is the extracellular vesicle. It is found in the endosome. It localises to the multivesicular body. APOE is an apolipoprotein, a protein associating with lipid particles, that mainly functions in lipoprotein-mediated lipid transport between organs via the plasma and interstitial fluids. APOE is a core component of plasma lipoproteins and is involved in their production, conversion and clearance. Apolipoproteins are amphipathic molecules that interact both with lipids of the lipoprotein particle core and the aqueous environment of the plasma. As such, APOE associates with chylomicrons, chylomicron remnants, very low density lipoproteins (VLDL) and intermediate density lipoproteins (IDL) but shows a preferential binding to high-density lipoproteins (HDL). It also binds a wide range of cellular receptors including the LDL receptor/LDLR, the LDL receptor-related proteins LRP1, LRP2 and LRP8 and the very low-density lipoprotein receptor/VLDLR that mediate the cellular uptake of the APOE-containing lipoprotein particles. Finally, APOE also has a heparin-binding activity and binds heparan-sulfate proteoglycans on the surface of cells, a property that supports the capture and the receptor-mediated uptake of APOE-containing lipoproteins by cells. A main function of APOE is to mediate lipoprotein clearance through the uptake of chylomicrons, VLDLs, and HDLs by hepatocytes. APOE is also involved in the biosynthesis by the liver of VLDLs as well as their uptake by peripheral tissues ensuring the delivery of triglycerides and energy storage in muscle, heart and adipose tissues. By participating in the lipoprotein-mediated distribution of lipids among tissues, APOE plays a critical role in plasma and tissues lipid homeostasis. APOE is also involved in two steps of reverse cholesterol transport, the HDLs-mediated transport of cholesterol from peripheral tissues to the liver, and thereby plays an important role in cholesterol homeostasis. First, it is functionally associated with ABCA1 in the biogenesis of HDLs in tissues. Second, it is enriched in circulating HDLs and mediates their uptake by hepatocytes. APOE also plays an important role in lipid transport in the central nervous system, regulating neuron survival and sprouting. The protein is Apolipoprotein E (APOE) of Ctenomys sociabilis (Social tuco-tuco).